The primary structure comprises 218 residues: Ras-related protein Rab-11B (218 aa).

Gly2 carries the N-acetylglycine modification. 11 residues coordinate GTP: Ser20, Gly21, Gly23, Lys24, Ser25, Asn26, Asn37, Leu38, Ser40, Ser42, and Thr43. Position 25 (Ser25) interacts with Mg(2+). The Switch 1 signature appears at 36 to 47 (FNLESKSTIGVE). 2 residues coordinate Mg(2+): Thr43 and Asp66. The Switch 2 motif lies at 67–86 (TAGQERYRAITSAYYRGAVG). The GTP site is built by Gly69, Asn124, Lys125, Asp127, Ala155, and Leu156. Positions 183 to 218 (DRSAHDESPGNNVVDISVPPTTDGQKSNKLQCCQNM) are disordered. The span at 201–218 (PPTTDGQKSNKLQCCQNM) shows a compositional bias: polar residues. 2 S-geranylgeranyl cysteine lipidation sites follow: Cys214 and Cys215. Cys215 carries the cysteine methyl ester modification. Residues 216–218 (QNM) constitute a propeptide, removed in mature form.

Belongs to the small GTPase superfamily. Rab family. It depends on Mg(2+) as a cofactor.

It is found in the recycling endosome membrane. The protein resides in the cytoplasmic vesicle. It localises to the secretory vesicle. The protein localises to the synaptic vesicle membrane. Its subcellular location is the phagosome membrane. The catalysed reaction is GTP + H2O = GDP + phosphate + H(+). With respect to regulation, regulated by guanine nucleotide exchange factors (GEFs) which promote the exchange of bound GDP for free GTP. Regulated by GTPase activating proteins (GAPs) which increase the GTP hydrolysis activity. Inhibited by GDP dissociation inhibitors (GDIs) which prevent Rab-GDP dissociation. In terms of biological role, the small GTPases Rab are key regulators of intracellular membrane trafficking, from the formation of transport vesicles to their fusion with membranes. Rabs cycle between an inactive GDP-bound form and an active GTP-bound form that is able to recruit to membranes different set of downstream effectors directly responsible for vesicle formation, movement, tethering and fusion. That Rab plays a role in endocytic recycling, regulating apical recycling of several transmembrane proteins including cystic fibrosis transmembrane conductance regulator/CFTR, epithelial sodium channel/ENaC, potassium voltage-gated channel, and voltage-dependent L-type calcium channel. May also regulate constitutive and regulated secretion, like insulin granule exocytosis. Required for melanosome transport and release from melanocytes. Also regulates V-ATPase intracellular transport in response to extracellular acidosis. The protein is Ras-related protein Rab-11B of Diplobatis ommata (Ocellated electric ray).